The primary structure comprises 73 residues: UPF0270 protein PMI2817 (73 aa).

Belongs to the UPF0270 family.

In Proteus mirabilis (strain HI4320), this protein is UPF0270 protein PMI2817.